The primary structure comprises 338 residues: UDP-glucose 4-epimerase (338 aa).

Residues 11–12 (YI), 31–36 (DNLCNS), 58–59 (DI), 80–84 (FAGLK), N99, S124, Y149, K153, and F178 each bind NAD(+). The substrate site is built by S124 and Y149. Y149 functions as the Proton acceptor in the catalytic mechanism. Substrate is bound by residues N179, 199–200 (NL), 216–218 (SVF), R231, and 292–295 (RPGD).

The protein belongs to the NAD(P)-dependent epimerase/dehydratase family. Homodimer. The cofactor is NAD(+).

The enzyme catalyses UDP-alpha-D-glucose = UDP-alpha-D-galactose. The protein operates within carbohydrate metabolism; galactose metabolism. Its function is as follows. Involved in the metabolism of galactose. Catalyzes the conversion of UDP-galactose (UDP-Gal) to UDP-glucose (UDP-Glc) through a mechanism involving the transient reduction of NAD. In Pasteurella multocida (strain Pm70), this protein is UDP-glucose 4-epimerase (galE).